A 911-amino-acid chain; its full sequence is Alpha-actinin-4 (911 aa).

Positions 1-269 are actin-binding; the sequence is MVDYHAANQS…YVSSFYHAFS (269 aa). The interval 8 to 31 is disordered; sequence NQSYQYGPSSGSNGAGGGGTMGDY. The interval 12–26 is interaction with VCL; sequence QYGPSSGSNGAGGGG. The residue at position 31 (Tyr31) is a Phosphotyrosine. Residues 40-61 are interaction with VCL; it reads RDLLLDPAWEKQQRKTFTAWCN. Calponin-homology (CH) domains are found at residues 50 to 154 and 163 to 269; these read KQQR…LRFA and TSAK…HAFS. Positions 84 to 88 match the LXXLL motif motif; sequence LMLLL. Residues 108–126 are interaction with VCL; sequence KINNVNKALDFIASKGVKL. Lys114 bears the N6-acetyllysine mark. Residues 177–192 are polyphosphoinositide (PIP2)-binding; that stretch reads TAPYKNVNVQNFHISW. Lys214 carries the post-translational modification N6-acetyllysine. Thr249 carries the post-translational modification Phosphothreonine. 4 Spectrin repeats span residues 293 to 403, 413 to 518, 528 to 639, and 649 to 752; these read HLME…WLLN, HLAE…ALEK, QLHL…ALLE, and HLRR…EVEN. N6-acetyllysine is present on residues Lys592 and Lys625. Residue Ser696 is modified to Phosphoserine. The interval 736-911 is mediates interaction with MICALL2; the sequence is WEQLLTTIAR…STALYGESDL (176 aa). EF-hand domains are found at residues 765–800 and 806–841; these read EQMQ…LGYD and QGDA…ETTD. Asp778 contacts Ca(2+). Lys779 is modified (N6-acetyllysine). Positions 780 and 789 each coordinate Ca(2+). At Lys859 the chain carries N6-acetyllysine. Ser909 is subject to Phosphoserine.

It belongs to the alpha-actinin family. Homodimer; antiparallel. Identified in a IGF2BP1-dependent mRNP granule complex containing untranslated mRNAs. Component of the CART complex, at least composed of ACTN4, HGS/HRS, MYO5B and TRIM3. Binds TRIM3 at the N-terminus. Interacts with MAGI1. Interacts with PDLIM2. Identified in a complex with CASK, IQGAP1, MAGI2, NPHS1, SPTAN1 and SPTBN1. Interacts with MICALL2 (preferentially in opened conformation); stimulated by RAB13 activation. Interacts with PPARG and RARA. Binds to VCL; this interaction triggers VCL conformational changes. Interacts with SEPTIN14. Interacts with IGSF8.

Its subcellular location is the nucleus. It is found in the cytoplasm. The protein resides in the cell junction. The protein localises to the cytoskeleton. It localises to the stress fiber. Its subcellular location is the perinuclear region. In terms of biological role, F-actin cross-linking protein which is thought to anchor actin to a variety of intracellular structures. This is a bundling protein. Probably involved in vesicular trafficking via its association with the CART complex. The CART complex is necessary for efficient transferrin receptor recycling but not for EGFR degradation. Involved in tight junction assembly in epithelial cells probably through interaction with MICALL2. Links MICALL2 to the actin cytoskeleton and recruits it to the tight junctions. May also function as a transcriptional coactivator, stimulating transcription mediated by the nuclear hormone receptors PPARG and RARA. Association with IGSF8 regulates the immune synapse formation and is required for efficient T-cell activation. This chain is Alpha-actinin-4, found in Bos taurus (Bovine).